The following is a 333-amino-acid chain: 1,5-anhydro-D-fructose reductase (333 aa).

NADP(+) is bound by residues 9 to 12 (ASTI), 33 to 34 (ST), Arg38, 71 to 76 (TTNELH), 93 to 94 (EK), Asn120, 162 to 163 (WR), and Tyr283.

In terms of assembly, monomer.

It catalyses the reaction 1,5-anhydro-D-mannitol + NADP(+) = 1,5-anhydro-D-fructose + NADPH + H(+). Catalyzes the NADPH-specific reduction of 1,5-anhydro-D-fructose to 1,5-anhydro-D-mannitol. Also shows some activity against structurally related compounds such as 3-keto-1,5-anhydro-D-fructose, D-glucosone and D-xylosone. The enzyme cannot use NADH as cosubstrate. The protein is 1,5-anhydro-D-fructose reductase (afr) of Ensifer adhaerens (Sinorhizobium morelense).